Reading from the N-terminus, the 149-residue chain is uncharacterized protein (149 aa).

Residues 34–94 (HTPCLPKVPR…NPIGSQRIHS (61 aa)) form a disordered region. Basic and acidic residues predominate over residues 56–66 (QSPHRQGDRRR).

It localises to the mitochondrion. This is an uncharacterized protein from Arabidopsis thaliana (Mouse-ear cress).